The chain runs to 91 residues: UPF0250 protein Pfl01_4965 (91 aa).

This sequence belongs to the UPF0250 family.

The protein is UPF0250 protein Pfl01_4965 of Pseudomonas fluorescens (strain Pf0-1).